The primary structure comprises 124 residues: Small ribosomal subunit protein uS13 (124 aa).

The tract at residues 94 to 124 is disordered; sequence RGMPVRGQRTKTNARTRKGPKRTIAGKKKAR.

Belongs to the universal ribosomal protein uS13 family. Part of the 30S ribosomal subunit. Forms a loose heterodimer with protein S19. Forms two bridges to the 50S subunit in the 70S ribosome.

Functionally, located at the top of the head of the 30S subunit, it contacts several helices of the 16S rRNA. In the 70S ribosome it contacts the 23S rRNA (bridge B1a) and protein L5 of the 50S subunit (bridge B1b), connecting the 2 subunits; these bridges are implicated in subunit movement. Contacts the tRNAs in the A and P-sites. This is Small ribosomal subunit protein uS13 from Mycobacterium tuberculosis (strain ATCC 25177 / H37Ra).